The primary structure comprises 376 residues: RING-H2 finger protein ATL46 (376 aa).

A helical transmembrane segment spans residues 45-65 (VLFVIVILAVLFFISGLLHLL). Residues 143–185 (CAVCLCEFSEKDKLRLLPMCSHAFHLNCIDTWLQSNSTCPLCR) form an RING-type; atypical zinc finger. 2 stretches are compositionally biased toward basic and acidic residues: residues 296–305 (RLKPQDKESE) and 358–376 (DLPK…NDGR). 2 disordered regions span residues 296–320 (RLKP…KINT) and 341–376 (FSSD…NDGR).

It belongs to the RING-type zinc finger family. ATL subfamily.

It is found in the membrane. It carries out the reaction S-ubiquitinyl-[E2 ubiquitin-conjugating enzyme]-L-cysteine + [acceptor protein]-L-lysine = [E2 ubiquitin-conjugating enzyme]-L-cysteine + N(6)-ubiquitinyl-[acceptor protein]-L-lysine.. It participates in protein modification; protein ubiquitination. In Arabidopsis thaliana (Mouse-ear cress), this protein is RING-H2 finger protein ATL46 (ATL46).